Here is a 43-residue protein sequence, read N- to C-terminus: Defensin (43 aa).

Intrachain disulfides connect cysteine 3/cysteine 34, cysteine 20/cysteine 39, and cysteine 24/cysteine 41.

Belongs to the invertebrate defensin family. Type 1 subfamily.

The protein localises to the secreted. Antibacterial peptide. Affects Gram-positive bacteria M.luteus, B.megaterium, A.viridans, S.aureus and S.saprophyticus. Moderate activity against P.acidilactici and B.subtilis QB935. Also affects Gram-negative bacterium, D22 form of E.coli. In Pyrrhocoris apterus (Sap sucking bug), this protein is Defensin.